We begin with the raw amino-acid sequence, 203 residues long: IMP cyclohydrolase (203 aa).

Belongs to the archaeal IMP cyclohydrolase family.

It catalyses the reaction IMP + H2O = 5-formamido-1-(5-phospho-D-ribosyl)imidazole-4-carboxamide. It functions in the pathway purine metabolism; IMP biosynthesis via de novo pathway; IMP from 5-formamido-1-(5-phospho-D-ribosyl)imidazole-4-carboxamide: step 1/1. In terms of biological role, catalyzes the cyclization of 5-formylamidoimidazole-4-carboxamide ribonucleotide to IMP. The polypeptide is IMP cyclohydrolase (Methanococcus aeolicus (strain ATCC BAA-1280 / DSM 17508 / OCM 812 / Nankai-3)).